Reading from the N-terminus, the 365-residue chain is 3-isopropylmalate dehydrogenase (365 aa).

Residue 80–91 (GPKWGTGAVRPE) coordinates NAD(+). Residues arginine 98, arginine 108, arginine 137, and aspartate 226 each coordinate substrate. Mg(2+) contacts are provided by aspartate 226, aspartate 251, and aspartate 255. Position 290–301 (290–301 (GSAPDLPKGKVN)) interacts with NAD(+).

This sequence belongs to the isocitrate and isopropylmalate dehydrogenases family. Homodimer. Mg(2+) is required as a cofactor. The cofactor is Mn(2+).

Its subcellular location is the cytoplasm. It carries out the reaction (2R,3S)-3-isopropylmalate + NAD(+) = 4-methyl-2-oxopentanoate + CO2 + NADH. Its pathway is amino-acid biosynthesis; L-leucine biosynthesis; L-leucine from 3-methyl-2-oxobutanoate: step 3/4. Functionally, catalyzes the oxidation of 3-carboxy-2-hydroxy-4-methylpentanoate (3-isopropylmalate) to 3-carboxy-4-methyl-2-oxopentanoate. The product decarboxylates to 4-methyl-2 oxopentanoate. The chain is 3-isopropylmalate dehydrogenase (LEU2) from Candida glabrata (strain ATCC 2001 / BCRC 20586 / JCM 3761 / NBRC 0622 / NRRL Y-65 / CBS 138) (Yeast).